The chain runs to 128 residues: Lymphocyte antigen 6D (128 aa).

A signal peptide spans 1–20; that stretch reads MRTALLLLAALAVATGPALT. Residues 21 to 108 form the UPAR/Ly6 domain; it reads LRCHVCTSSS…AAPTRTALAH (88 aa). 5 disulfides stabilise this stretch: Cys-23–Cys-45, Cys-26–Cys-32, Cys-38–Cys-63, Cys-67–Cys-86, and Cys-87–Cys-92. Asn-98 carries the GPI-anchor amidated asparagine lipid modification. Positions 99–128 are cleaved as a propeptide — removed in mature form; sequence AAPTRTALAHSALSLGLALSLLAVILAPSL.

Expressed exclusively at the outer cell surface of transitional epithelia and the keratinocyte of stratified squamous epithelia.

It is found in the cell membrane. Functionally, may act as a specification marker at earliest stage specification of lymphocytes between B- and T-cell development. Marks the earliest stage of B-cell specification. This Homo sapiens (Human) protein is Lymphocyte antigen 6D (LY6D).